A 361-amino-acid chain; its full sequence is POU domain, class 3, transcription factor 4 (361 aa).

2 disordered regions span residues 99–131 and 144–192; these read PHVA…GQPL and MLEH…PTSD. A compositionally biased stretch (polar residues) spans 122–131; sequence PSITSSGQPL. Over residues 165–183 the composition is skewed to basic and acidic residues; sequence VLREPPDHGELGSHHCQDH. The 75-residue stretch at 186–260 folds into the POU-specific domain; it reads EETPTSDELE…LLNKWLEEAD (75 aa). Residue Ser-265 is modified to Phosphoserine. The homeobox DNA-binding region spans 278–337; that stretch reads KRKKRTSIEVSVKGVLETHFLKCPKPAAQEISSLADSLQLEKEVVRVWFCNRRQKEKRMT.

It belongs to the POU transcription factor family. Class-3 subfamily. Interacts with HNRNPU. In terms of tissue distribution, brain specific.

Its subcellular location is the nucleus. Functionally, probable transcription factor which exert its primary action widely during early neural development and in a very limited set of neurons in the mature brain. The chain is POU domain, class 3, transcription factor 4 (POU3F4) from Homo sapiens (Human).